Reading from the N-terminus, the 1065-residue chain is Probable importin-7 homolog (1065 aa).

Residues 25–98 (AEAQLQQIKV…KENLIDLLVH (74 aa)) enclose the Importin N-terminal domain. Residues 958 to 996 (ENGGDLGEDEGDNFDDQNDDDDQDSEEDLFEDEDTPDFE) form a disordered region. Over residues 963 to 996 (LGEDEGDNFDDQNDDDDQDSEEDLFEDEDTPDFE) the composition is skewed to acidic residues.

Belongs to the importin beta family.

The protein resides in the cytoplasm. It localises to the nucleus. May function in nuclear protein import. The chain is Probable importin-7 homolog from Dictyostelium discoideum (Social amoeba).